A 294-amino-acid polypeptide reads, in one-letter code: Urease accessory protein UreD 1 (294 aa).

Positions Met-1–Val-22 are disordered. Residues Lys-11 to Pro-21 show a composition bias toward pro residues.

Belongs to the UreD family. As to quaternary structure, ureD, UreF and UreG form a complex that acts as a GTP-hydrolysis-dependent molecular chaperone, activating the urease apoprotein by helping to assemble the nickel containing metallocenter of UreC. The UreE protein probably delivers the nickel.

It is found in the cytoplasm. Its function is as follows. Required for maturation of urease via the functional incorporation of the urease nickel metallocenter. The protein is Urease accessory protein UreD 1 of Methylorubrum extorquens (strain PA1) (Methylobacterium extorquens).